A 315-amino-acid polypeptide reads, in one-letter code: Ribonuclease Z (315 aa).

The Zn(2+) site is built by histidine 61, histidine 63, aspartate 65, histidine 66, histidine 151, aspartate 219, and histidine 278. Aspartate 65 functions as the Proton acceptor in the catalytic mechanism.

This sequence belongs to the RNase Z family. In terms of assembly, homodimer. Requires Zn(2+) as cofactor.

It catalyses the reaction Endonucleolytic cleavage of RNA, removing extra 3' nucleotides from tRNA precursor, generating 3' termini of tRNAs. A 3'-hydroxy group is left at the tRNA terminus and a 5'-phosphoryl group is left at the trailer molecule.. Zinc phosphodiesterase, which displays some tRNA 3'-processing endonuclease activity. Probably involved in tRNA maturation, by removing a 3'-trailer from precursor tRNA. The polypeptide is Ribonuclease Z (Clostridium botulinum (strain Eklund 17B / Type B)).